Reading from the N-terminus, the 301-residue chain is Probable alpha-L-glutamate ligase (301 aa).

In terms of domain architecture, ATP-grasp spans 104–287 (LQLLARKGVG…VAGMIINWTE (184 aa)). ATP contacts are provided by residues Lys-141, 178–179 (EF), Asp-187, and 211–213 (RSN). Mg(2+)-binding residues include Asp-248, Glu-260, and Asn-262. Asp-248, Glu-260, and Asn-262 together coordinate Mn(2+).

It belongs to the RimK family. It depends on Mg(2+) as a cofactor. Requires Mn(2+) as cofactor.

The polypeptide is Probable alpha-L-glutamate ligase (Marinobacter nauticus (strain ATCC 700491 / DSM 11845 / VT8) (Marinobacter aquaeolei)).